A 318-amino-acid chain; its full sequence is Biotin synthase (318 aa).

The region spanning 44-273 (LCGKKFNLCT…EKQIRLAGGR (230 aa)) is the Radical SAM core domain. 3 residues coordinate [4Fe-4S] cluster: Cys-62, Cys-66, and Cys-69. [2Fe-2S] cluster contacts are provided by Ser-106, Cys-138, Cys-198, and Arg-268.

Belongs to the radical SAM superfamily. Biotin synthase family. In terms of assembly, homodimer. Requires [4Fe-4S] cluster as cofactor. [2Fe-2S] cluster serves as cofactor.

It carries out the reaction (4R,5S)-dethiobiotin + (sulfur carrier)-SH + 2 reduced [2Fe-2S]-[ferredoxin] + 2 S-adenosyl-L-methionine = (sulfur carrier)-H + biotin + 2 5'-deoxyadenosine + 2 L-methionine + 2 oxidized [2Fe-2S]-[ferredoxin]. It functions in the pathway cofactor biosynthesis; biotin biosynthesis; biotin from 7,8-diaminononanoate: step 2/2. Catalyzes the conversion of dethiobiotin (DTB) to biotin by the insertion of a sulfur atom into dethiobiotin via a radical-based mechanism. This is Biotin synthase from Clostridium botulinum (strain Alaska E43 / Type E3).